Consider the following 415-residue polypeptide: Tyrosine--tRNA ligase (415 aa).

L-tyrosine is bound at residue Tyr33. The 'HIGH' region signature appears at 38 to 47; it reads PSGESLHLGN. L-tyrosine is bound by residues Tyr161 and Gln165. The short motif at 225–229 is the 'KMSKS' region element; the sequence is KFGKS. Lys228 is a binding site for ATP. The region spanning 350–414 is the S4 RNA-binding domain; it reads MVIDFLLQAK…KKNYFIVVWK (65 aa).

This sequence belongs to the class-I aminoacyl-tRNA synthetase family. TyrS type 1 subfamily. As to quaternary structure, homodimer.

The protein resides in the cytoplasm. The enzyme catalyses tRNA(Tyr) + L-tyrosine + ATP = L-tyrosyl-tRNA(Tyr) + AMP + diphosphate + H(+). In terms of biological role, catalyzes the attachment of tyrosine to tRNA(Tyr) in a two-step reaction: tyrosine is first activated by ATP to form Tyr-AMP and then transferred to the acceptor end of tRNA(Tyr). The protein is Tyrosine--tRNA ligase of Mycoplasmoides gallisepticum (strain R(low / passage 15 / clone 2)) (Mycoplasma gallisepticum).